The sequence spans 344 residues: Phosphate acyltransferase (344 aa).

The protein belongs to the PlsX family. As to quaternary structure, homodimer. Probably interacts with PlsY.

Its subcellular location is the cytoplasm. The catalysed reaction is a fatty acyl-[ACP] + phosphate = an acyl phosphate + holo-[ACP]. The protein operates within lipid metabolism; phospholipid metabolism. Its function is as follows. Catalyzes the reversible formation of acyl-phosphate (acyl-PO(4)) from acyl-[acyl-carrier-protein] (acyl-ACP). This enzyme utilizes acyl-ACP as fatty acyl donor, but not acyl-CoA. In Sodalis glossinidius (strain morsitans), this protein is Phosphate acyltransferase.